The primary structure comprises 234 residues: Adenosine 5'-phosphosulfate reductase (234 aa).

[4Fe-4S] cluster is bound by residues Cys-120, Cys-121, Cys-203, and Cys-206. The active-site Nucleophile; cysteine thiosulfonate intermediate is Cys-229.

It belongs to the PAPS reductase family. CysH subfamily. [4Fe-4S] cluster is required as a cofactor.

The protein resides in the cytoplasm. The enzyme catalyses [thioredoxin]-disulfide + sulfite + AMP + 2 H(+) = adenosine 5'-phosphosulfate + [thioredoxin]-dithiol. It functions in the pathway sulfur metabolism; hydrogen sulfide biosynthesis; sulfite from sulfate. In terms of biological role, catalyzes the formation of sulfite from adenosine 5'-phosphosulfate (APS) using thioredoxin as an electron donor. This is Adenosine 5'-phosphosulfate reductase from Bacillus mycoides (strain KBAB4) (Bacillus weihenstephanensis).